Reading from the N-terminus, the 85-residue chain is Phosphocarrier protein HPr (85 aa).

Positions 1–85 constitute an HPr domain; that stretch reads MFQNQVKITA…HLSLIMTELE (85 aa). His-15 serves as the catalytic Pros-phosphohistidine intermediate.

It belongs to the HPr family.

It localises to the cytoplasm. Its function is as follows. General (non sugar-specific) component of the phosphoenolpyruvate-dependent sugar phosphotransferase system (sugar PTS). This major carbohydrate active-transport system catalyzes the phosphorylation of incoming sugar substrates concomitantly with their translocation across the cell membrane. The phosphoryl group from phosphoenolpyruvate (PEP) is transferred to the phosphoryl carrier protein HPr by enzyme I. Phospho-HPr then transfers it to the PTS EIIA domain. The sequence is that of Phosphocarrier protein HPr (ptsH) from Buchnera aphidicola subsp. Acyrthosiphon pisum (strain APS) (Acyrthosiphon pisum symbiotic bacterium).